An 808-amino-acid chain; its full sequence is Na(+)/H(+) antiporter 2 (808 aa).

The next 9 helical transmembrane spans lie at 12-32 (HVAYSCVGIFSSIFSLVSLFV), 36-56 (LYIGESMVASIFGLIVGPHCL), 70-90 (ITLEISRILLCLQVFAVSVEL), 105-125 (LLVPVMTSGWLVIALFVWILV), 128-148 (LNFPASLLMGACITATDPVLA), 174-194 (CNDGLAIPFVFLSLDLLLYPG), 203-223 (WICVTILWECIFGSILGCIIG), 244-264 (FLAFYLILALTCAGFGSMLGV), and 267-287 (LLVSFFAGTAFAWDGWFAAKT). A glycan (N-linked (GlcNAc...) asparagine) is linked at Asn291. 5 helical membrane passes run 294 to 314 (NVIDVLLNYAYFVYLGSILPW), 319 to 339 (NPDIGLDVWRLILLSLVVIFL), 361 to 381 (AMFIGHFGPIGVGAVFAAITS), 409 to 429 (VMACIWPITCFSIMTSVIVHG), and 432 to 452 (VAVIMLGRYLSTVTLMALPTG). Disordered regions lie at residues 478–499 (QRLDKEPSLSPGQIGGRTSGMV) and 541–562 (HASTNDSHGTTTANLGTSNGRA). Positions 542-561 (ASTNDSHGTTTANLGTSNGR) are enriched in polar residues. Residues Asn545 and Asn602 are each glycosylated (N-linked (GlcNAc...) asparagine). The tract at residues 774 to 808 (LHSEDEMADDEAESENDMDYEDSDGPASRFKDHAD) is disordered. Over residues 779–797 (EMADDEAESENDMDYEDSD) the composition is skewed to acidic residues.

This sequence belongs to the fungal Na(+)/H(+) exchanger family.

The protein localises to the membrane. In terms of biological role, sodium export from cell, takes up external protons in exchange for internal sodium ions. Seems to be poorly expressed. In Zygosaccharomyces rouxii, this protein is Na(+)/H(+) antiporter 2 (SOD22).